Consider the following 167-residue polypeptide: NADH-quinone oxidoreductase subunit B 2 (167 aa).

Positions 39, 40, 104, and 134 each coordinate [4Fe-4S] cluster.

This sequence belongs to the complex I 20 kDa subunit family. As to quaternary structure, NDH-1 is composed of 14 different subunits. Subunits NuoB, C, D, E, F, and G constitute the peripheral sector of the complex. The cofactor is [4Fe-4S] cluster.

The protein localises to the cell inner membrane. It carries out the reaction a quinone + NADH + 5 H(+)(in) = a quinol + NAD(+) + 4 H(+)(out). Functionally, NDH-1 shuttles electrons from NADH, via FMN and iron-sulfur (Fe-S) centers, to quinones in the respiratory chain. Couples the redox reaction to proton translocation (for every two electrons transferred, four hydrogen ions are translocated across the cytoplasmic membrane), and thus conserves the redox energy in a proton gradient. The protein is NADH-quinone oxidoreductase subunit B 2 of Burkholderia mallei (strain NCTC 10247).